Reading from the N-terminus, the 55-residue chain is Mitochondrial import receptor subunit TOM7 homolog (55 aa).

Residues 1-20 (MVKLSKEAKQRLQQLFKGSQ) lie on the Cytoplasmic side of the membrane. Residues 21–36 (FAIRWGFIPLVIYLGF) form a helical membrane-spanning segment. Topologically, residues 37–55 (KRGADPGMPEPTVLSLLWG) are mitochondrial intermembrane.

It belongs to the Tom7 family. Forms part of the preprotein translocase complex of the outer mitochondrial membrane (TOM complex) which consists of at least 7 different proteins (TOMM5, TOMM6, TOMM7, TOMM20, TOMM22, TOMM40 and TOMM70).

The protein resides in the mitochondrion outer membrane. Its function is as follows. Required for assembly and stability of the TOM complex. Positive regulator of PRKN translocation to damaged mitochondria. Acts probably by stabilizing PINK1 on the outer membrane of depolarized mitochondria. This Homo sapiens (Human) protein is Mitochondrial import receptor subunit TOM7 homolog (TOMM7).